A 344-amino-acid chain; its full sequence is Dihydroorotase (344 aa).

Zn(2+)-binding residues include His14 and His16. Substrate contacts are provided by residues 16 to 18 (HLR) and Asn42. Residues Lys100, His137, and His175 each coordinate Zn(2+). Lys100 bears the N6-carboxylysine mark. His137 lines the substrate pocket. Leu220 lines the substrate pocket. Asp248 lines the Zn(2+) pocket. Asp248 is a catalytic residue. Residues His252 and Ala264 each contribute to the substrate site.

Belongs to the metallo-dependent hydrolases superfamily. DHOase family. Class II DHOase subfamily. As to quaternary structure, homodimer. Zn(2+) serves as cofactor.

It catalyses the reaction (S)-dihydroorotate + H2O = N-carbamoyl-L-aspartate + H(+). It functions in the pathway pyrimidine metabolism; UMP biosynthesis via de novo pathway; (S)-dihydroorotate from bicarbonate: step 3/3. Its function is as follows. Catalyzes the reversible cyclization of carbamoyl aspartate to dihydroorotate. In Cupriavidus taiwanensis (strain DSM 17343 / BCRC 17206 / CCUG 44338 / CIP 107171 / LMG 19424 / R1) (Ralstonia taiwanensis (strain LMG 19424)), this protein is Dihydroorotase.